Reading from the N-terminus, the 418-residue chain is ATP phosphoribosyltransferase regulatory subunit (418 aa).

The protein belongs to the class-II aminoacyl-tRNA synthetase family. HisZ subfamily. As to quaternary structure, heteromultimer composed of HisG and HisZ subunits.

Its subcellular location is the cytoplasm. The protein operates within amino-acid biosynthesis; L-histidine biosynthesis; L-histidine from 5-phospho-alpha-D-ribose 1-diphosphate: step 1/9. Functionally, required for the first step of histidine biosynthesis. May allow the feedback regulation of ATP phosphoribosyltransferase activity by histidine. This is ATP phosphoribosyltransferase regulatory subunit from Halothermothrix orenii (strain H 168 / OCM 544 / DSM 9562).